We begin with the raw amino-acid sequence, 226 residues long: NAD(P)H-hydrate epimerase (226 aa).

The region spanning A10–L215 is the YjeF N-terminal domain. Position 58–62 (N58–D62) interacts with (6S)-NADPHX. K(+) is bound by residues N59 and D123. (6S)-NADPHX contacts are provided by residues G127 to P133 and D156. Position 159 (S159) interacts with K(+).

Belongs to the NnrE/AIBP family. The cofactor is K(+).

It carries out the reaction (6R)-NADHX = (6S)-NADHX. It catalyses the reaction (6R)-NADPHX = (6S)-NADPHX. Functionally, catalyzes the epimerization of the S- and R-forms of NAD(P)HX, a damaged form of NAD(P)H that is a result of enzymatic or heat-dependent hydration. This is a prerequisite for the S-specific NAD(P)H-hydrate dehydratase to allow the repair of both epimers of NAD(P)HX. This chain is NAD(P)H-hydrate epimerase, found in Drosophila pseudoobscura pseudoobscura (Fruit fly).